The following is a 156-amino-acid chain: Persephin (156 aa).

The first 21 residues, 1–21 (MAAGRLRILCLLLLSLHPSLG), serve as a signal peptide directing secretion. Intrachain disulfides connect cysteine 66-cysteine 124, cysteine 93-cysteine 152, and cysteine 97-cysteine 154.

This sequence belongs to the TGF-beta family. GDNF subfamily. In terms of assembly, homodimer; disulfide-linked. Interacts with GFRA4 coreceptor and RET: forms a 2:2:2 ternary complex composed of PSPN ligand, GFRA4 and RET receptor.

The protein localises to the secreted. In terms of biological role, growth factor that exhibits neurotrophic activity on mesencephalic dopaminergic and motor neurons. Acts by binding to its coreceptor, GFRA4, leading to autophosphorylation and activation of the RET receptor. This is Persephin from Mus musculus (Mouse).